A 295-amino-acid chain; its full sequence is Small ribosomal subunit biogenesis GTPase RsgA (295 aa).

The CP-type G domain maps to 68-228 (KNLLTKPHVA…VVDTPGFANL (161 aa)). Residues 117–120 (NKMD) and 170–178 (GLSGVGKSS) each bind GTP. Residues Cys250, Cys255, His257, and Cys263 each contribute to the Zn(2+) site.

Belongs to the TRAFAC class YlqF/YawG GTPase family. RsgA subfamily. As to quaternary structure, monomer. Associates with 30S ribosomal subunit, binds 16S rRNA. It depends on Zn(2+) as a cofactor.

The protein localises to the cytoplasm. Functionally, one of several proteins that assist in the late maturation steps of the functional core of the 30S ribosomal subunit. Helps release RbfA from mature subunits. May play a role in the assembly of ribosomal proteins into the subunit. Circularly permuted GTPase that catalyzes slow GTP hydrolysis, GTPase activity is stimulated by the 30S ribosomal subunit. The chain is Small ribosomal subunit biogenesis GTPase RsgA from Thermotoga petrophila (strain ATCC BAA-488 / DSM 13995 / JCM 10881 / RKU-1).